The primary structure comprises 1358 residues: Protein STU1 (1358 aa).

Disordered regions lie at residues 915-950 (FVAD…SHGF) and 970-990 (QPET…DESN). Positions 926–949 (DDTKKNGSDVVDHEEIRDHEESHG) are enriched in basic and acidic residues. Over residues 973-990 (TVDENVDPMEVDSPDESN) the composition is skewed to acidic residues.

Belongs to the CLASP family. In terms of assembly, interacts with microtubules.

Its subcellular location is the cytoplasm. The protein resides in the cytoskeleton. The protein localises to the nucleus. It localises to the spindle. In terms of biological role, microtubule binding protein that promotes the stabilization of dynamic microtubules. Required for mitotic spindle formation. In Kluyveromyces lactis (strain ATCC 8585 / CBS 2359 / DSM 70799 / NBRC 1267 / NRRL Y-1140 / WM37) (Yeast), this protein is Protein STU1 (STU1).